The sequence spans 466 residues: GVGFKAGVKDYKLTYYTPEYQTLDTDILAAFRVTPQPGVPPEEAGTAVAAESSTGTWTTVWTDGLTSLDRYKGRCYHIEPVSGEENQFIVYVAYPLDLFEEGSVTNMFTSIVGNVFGFKALRALRLEDLRIPPAYSKTFQGPPHGIQVERDKLNKYGRPLLGCTIKPKLGLSAKNYGRAVYECLRGGLDFTKDDENVNSQPFMRWRDRFLFCAEALYKAQAETGEIKGHYLNATAGTCEEMIKRAVFARELGVPIVMHDYLTGGFTANTSLAHYCRDNGLLLHIHRAMHAVIDRQKNHGIDFRVLAKALRMSGGDHIHSGTVVGKLEGERDITLGFVVLLRDDFIEKDRSRGIYFTQPWVSLPGVLPVASGGIHVWHMPALTEIFGDDSVLQFGGGTLGHPWGNPPGAAANRVALEACVQARNHGQDLAREGNDVIRRASKWSPELSSACEVWKEIKLYFEAMDTL.

At K5 the chain carries N6,N6,N6-trimethyllysine. Substrate is bound by residues N114 and T164. Residue K166 is the Proton acceptor of the active site. K168 serves as a coordination point for substrate. Mg(2+)-binding residues include K192, D194, and E195. K192 is subject to N6-carboxylysine. Residue H285 is the Proton acceptor of the active site. Substrate is bound by residues R286, H318, and S370.

This sequence belongs to the RuBisCO large chain family. Type I subfamily. In terms of assembly, heterohexadecamer of 8 large chains and 8 small chains; disulfide-linked. The disulfide link is formed within the large subunit homodimers. It depends on Mg(2+) as a cofactor. The disulfide bond which can form in the large chain dimeric partners within the hexadecamer appears to be associated with oxidative stress and protein turnover.

The protein localises to the plastid. Its subcellular location is the chloroplast. The enzyme catalyses 2 (2R)-3-phosphoglycerate + 2 H(+) = D-ribulose 1,5-bisphosphate + CO2 + H2O. The catalysed reaction is D-ribulose 1,5-bisphosphate + O2 = 2-phosphoglycolate + (2R)-3-phosphoglycerate + 2 H(+). RuBisCO catalyzes two reactions: the carboxylation of D-ribulose 1,5-bisphosphate, the primary event in carbon dioxide fixation, as well as the oxidative fragmentation of the pentose substrate in the photorespiration process. Both reactions occur simultaneously and in competition at the same active site. The polypeptide is Ribulose bisphosphate carboxylase large chain (Drosera capensis (Cape sundew)).